We begin with the raw amino-acid sequence, 85 residues long: MKADIHPDYHPVLFRDLASGKVILTRSTATSSKTETWEDGDEYPIIEVEISSESHPFYTGKQRIMDSAGRVERFNQRFANFGKSK.

This sequence belongs to the bacterial ribosomal protein bL31 family. Type B subfamily. In terms of assembly, part of the 50S ribosomal subunit.

The sequence is that of Large ribosomal subunit protein bL31B from Kocuria rhizophila (strain ATCC 9341 / DSM 348 / NBRC 103217 / DC2201).